A 300-amino-acid chain; its full sequence is Protein FANTASTIC FOUR 4 (300 aa).

Polar residues predominate over residues 30–56 (PQLSTPLKSHFQNSSIAPQDNPITINA). Disordered regions lie at residues 30–104 (PQLS…SPSS), 142–170 (TMETRTTSTTSNPSRQDRKRNTMASLPPP), and 227–264 (TETKEEKEEEEEETIETVRDNEEEIPEYKEEEEEKEEE). Low complexity-rich tracts occupy residues 58–88 (SLPSSSPNPSSNSDTNSGSWSFLESLSNSSS) and 142–151 (TMETRTTSTT). The 52-residue stretch at 166-217 (SLPPPLTSMIGFDCIEVKSHRENGRLVMMATRPPPRNRCLQDRSNGCVRLAI) folds into the FAF domain. Over residues 233–262 (KEEEEEETIETVRDNEEEIPEYKEEEEEKE) the composition is skewed to acidic residues.

It belongs to the fantastic four family. Expressed in the shoot apex and young siliques. Detected in provascular and vascular tissue, but not in the vegetative meristem. In inflorescences, restricted to the base of the flower and to the vasculature of the stem and the pedicels, but absent from young flowers. Detected in the center of the inflorescence meristem.

Regulates the size of the shoot meristem by modulating the CLV3-WUS feedback loop. Can repress WUS but is under negative control by CLV3. The polypeptide is Protein FANTASTIC FOUR 4 (FAF4) (Arabidopsis thaliana (Mouse-ear cress)).